Consider the following 44-residue polypeptide: Large ribosomal subunit protein bL34 (44 aa).

Residues 1 to 26 (MQRTLGGTNRKRKRTSGFRARMRTPD) are disordered. Residues 9 to 22 (NRKRKRTSGFRARM) show a composition bias toward basic residues.

Belongs to the bacterial ribosomal protein bL34 family.

The chain is Large ribosomal subunit protein bL34 from Trichormus variabilis (strain ATCC 29413 / PCC 7937) (Anabaena variabilis).